Consider the following 49-residue polypeptide: Large ribosomal subunit protein bL33 (49 aa).

The protein belongs to the bacterial ribosomal protein bL33 family.

The polypeptide is Large ribosomal subunit protein bL33 (Heliobacterium modesticaldum (strain ATCC 51547 / Ice1)).